Reading from the N-terminus, the 138-residue chain is Superoxide dismutase [Mn] (138 aa).

Q1, H49, D133, and H137 together coordinate Mn(2+).

It belongs to the iron/manganese superoxide dismutase family. Mn(2+) serves as cofactor.

It catalyses the reaction 2 superoxide + 2 H(+) = H2O2 + O2. Its function is as follows. Destroys superoxide anion radicals which are normally produced within the cells and which are toxic to biological systems. This is Superoxide dismutase [Mn] (sodA) from Mycobacteroides chelonae (Mycobacterium chelonae).